The following is a 154-amino-acid chain: Large ribosomal subunit protein uL13 (154 aa).

It belongs to the universal ribosomal protein uL13 family. In terms of assembly, part of the 50S ribosomal subunit.

In terms of biological role, this protein is one of the early assembly proteins of the 50S ribosomal subunit, although it is not seen to bind rRNA by itself. It is important during the early stages of 50S assembly. This Borrelia garinii subsp. bavariensis (strain ATCC BAA-2496 / DSM 23469 / PBi) (Borreliella bavariensis) protein is Large ribosomal subunit protein uL13.